Here is a 290-residue protein sequence, read N- to C-terminus: MNFIIATRRSKLAQVQTEIIIDLLNKKHDIECEKLLIETVGDKILEVSLDKIGGKGLFVKDIEVAMLEQRADAAVHSMKDVPYEMPKGFEIIAIPEREDVRDAFISLDNIKFKDLREGAKIGTSSRRRAAQLKLLRPDLDIVPIRGNVQTRIEKIKKENLDGIILAVAGLKRVNLDHLITDYFDTKEMVPAIGQGALGIEVMEEHPKKELFKDLDHYNSKICVLAERAFMRELDGDCHSTIGAYASIKDNIMHIIGIFERKNKIVKKEITGTKDQYEKLGIALAEHILKD.

Position 237 is an S-(dipyrrolylmethanemethyl)cysteine (C237).

Belongs to the HMBS family. In terms of assembly, monomer. The cofactor is dipyrromethane.

It catalyses the reaction 4 porphobilinogen + H2O = hydroxymethylbilane + 4 NH4(+). It participates in porphyrin-containing compound metabolism; protoporphyrin-IX biosynthesis; coproporphyrinogen-III from 5-aminolevulinate: step 2/4. In terms of biological role, tetrapolymerization of the monopyrrole PBG into the hydroxymethylbilane pre-uroporphyrinogen in several discrete steps. This chain is Porphobilinogen deaminase, found in Clostridium botulinum (strain Loch Maree / Type A3).